The primary structure comprises 352 residues: MDYQVSSPTYDIDYYTSGPCQKINVKQIAARLLPPLYSLVFIFGFVGNMLVILILINCKRLKSMTDIYLLNLAISDLFFLLTVPFWAHYAAAQWDFGNTMCQLLTGLYFIGFFSGIFFIILLTIDRYLAIVHAVFALKARTVTFGVVTSVITWVVAVFASLPGIIFTRSQKEGLHYTCSSHFPYSQYQFWKNFQTLKIVILGLVLPLLVMVICYSGILKTLLRCRNEKKRHRAVRLIFTIMIVYFLFWAPYNIVLLLNTFQEFFGLNNCSSSNRLDQAMQVTETLGMTHCCINPIIYAFVGEKFRNYLLVFFQKHIAKHFCKCCSIFQQEAPERASSVYTRSTGEQEISVGL.

Residues 1–30 (MDYQVSSPTYDIDYYTSGPCQKINVKQIAA) lie on the Extracellular side of the membrane. Y3 carries the post-translational modification Sulfotyrosine. O-linked (GalNAc...) serine glycosylation is found at S6 and S7. Y10, Y14, and Y15 each carry sulfotyrosine. 2 disulfide bridges follow: C20/C269 and C101/C178. A helical membrane pass occupies residues 31–58 (RLLPPLYSLVFIFGFVGNMLVILILINC). At 59–68 (KRLKSMTDIY) the chain is on the cytoplasmic side. The helical transmembrane segment at 69-89 (LLNLAISDLFFLLTVPFWAHY) threads the bilayer. The Extracellular portion of the chain corresponds to 90–102 (AAAQWDFGNTMCQ). The chain crosses the membrane as a helical span at residues 103 to 124 (LLTGLYFIGFFSGIFFIILLTI). Topologically, residues 125-141 (DRYLAIVHAVFALKART) are cytoplasmic. A helical membrane pass occupies residues 142-166 (VTFGVVTSVITWVVAVFASLPGIIF). Topologically, residues 167 to 198 (TRSQKEGLHYTCSSHFPYSQYQFWKNFQTLKI) are extracellular. A helical membrane pass occupies residues 199–218 (VILGLVLPLLVMVICYSGIL). Residues 219–235 (KTLLRCRNEKKRHRAVR) lie on the Cytoplasmic side of the membrane. Residues 236-260 (LIFTIMIVYFLFWAPYNIVLLLNTF) form a helical membrane-spanning segment. The Extracellular portion of the chain corresponds to 261–277 (QEFFGLNNCSSSNRLDQ). The chain crosses the membrane as a helical span at residues 278–301 (AMQVTETLGMTHCCINPIIYAFVG). Residues 302–352 (EKFRNYLLVFFQKHIAKHFCKCCSIFQQEAPERASSVYTRSTGEQEISVGL) lie on the Cytoplasmic side of the membrane. 3 S-palmitoyl cysteine lipidation sites follow: C321, C323, and C324. Phosphoserine; by BARK1 occurs at positions 336, 337, 342, and 349.

The protein belongs to the G-protein coupled receptor 1 family. As to quaternary structure, interacts with PRAF2. Efficient ligand binding to CCL3/MIP-1alpha and CCL4/MIP-1beta requires sulfation, O-glycosylation and sialic acid modifications. Glycosylation on Ser-6 is required for efficient binding of CCL4. Interacts with GRK2. Interacts with ARRB1 and ARRB2. Interacts with CNIH4. Interacts with S100A4; this interaction stimulates T-lymphocyte chemotaxis. Sulfated on at least 2 of the N-terminal tyrosines. Sulfation is required for efficient binding of the chemokines, CCL3 and CCL4. Post-translationally, palmitoylation in the C-terminal is important for cell surface expression. In terms of processing, phosphorylation on serine residues in the C-terminal is stimulated by binding CC chemokines especially by APO-RANTES. O-glycosylated, but not N-glycosylated. Ser-6 appears to be the major site even if Ser-7 may be also O-glycosylated. Also sialylated glycans present which contribute to chemokine binding. Thr-16 and Ser-17 may also be glycosylated and, if so, with small moieties such as a T-antigen.

The protein resides in the cell membrane. Receptor for a number of inflammatory CC-chemokines including CCL3/MIP-1-alpha, CCL4/MIP-1-beta and RANTES and subsequently transduces a signal by increasing the intracellular calcium ion level. May play a role in the control of granulocytic lineage proliferation or differentiation. Participates in T-lymphocyte migration to the infection site by acting as a chemotactic receptor. The chain is C-C chemokine receptor type 5 (CCR5) from Hylobates moloch (Silvery gibbon).